Consider the following 59-residue polypeptide: UPF0337 protein MM_2677 (59 aa).

Basic and acidic residues-rich tracts occupy residues 1–24 and 33–59; these read MKEGTKEEMEGKFSKAKGEIKESA and MEAKGEAEKRKGEAQEKVGKIRKEFEK. The segment at 1-59 is disordered; sequence MKEGTKEEMEGKFSKAKGEIKESAGEMTGDIEMEAKGEAEKRKGEAQEKVGKIRKEFEK.

The protein belongs to the UPF0337 (CsbD) family.

The chain is UPF0337 protein MM_2677 from Methanosarcina mazei (strain ATCC BAA-159 / DSM 3647 / Goe1 / Go1 / JCM 11833 / OCM 88) (Methanosarcina frisia).